Here is a 721-residue protein sequence, read N- to C-terminus: Catalase-peroxidase (721 aa).

A cross-link (tryptophyl-tyrosyl-methioninium (Trp-Tyr) (with M-249)) is located at residues 95 to 223 (WHSAGSYRLF…LGAVHMGLIY (129 aa)). His-96 (proton acceptor) is an active-site residue. Residues 223 to 249 (YVNPQGRDGKPDPLKSAHDVRVTFKRM) constitute a cross-link (tryptophyl-tyrosyl-methioninium (Tyr-Met) (with W-95)). His-264 provides a ligand contact to heme b.

The protein belongs to the peroxidase family. Peroxidase/catalase subfamily. In terms of assembly, homodimer or homotetramer. Heme b is required as a cofactor. Post-translationally, formation of the three residue Trp-Tyr-Met cross-link is important for the catalase, but not the peroxidase activity of the enzyme.

It carries out the reaction H2O2 + AH2 = A + 2 H2O. The enzyme catalyses 2 H2O2 = O2 + 2 H2O. Its function is as follows. Bifunctional enzyme with both catalase and broad-spectrum peroxidase activity. In Parvibaculum lavamentivorans (strain DS-1 / DSM 13023 / NCIMB 13966), this protein is Catalase-peroxidase.